Consider the following 693-residue polypeptide: Elongation factor G (693 aa).

Residues 8-283 enclose the tr-type G domain; the sequence is PQQRNIGIMA…AVVEYLPSPV (276 aa). GTP-binding positions include 17–24, 81–85, and 135–138; these read AHIDAGKT, DTPGH, and NKMD.

Belongs to the TRAFAC class translation factor GTPase superfamily. Classic translation factor GTPase family. EF-G/EF-2 subfamily.

Its subcellular location is the cytoplasm. Catalyzes the GTP-dependent ribosomal translocation step during translation elongation. During this step, the ribosome changes from the pre-translocational (PRE) to the post-translocational (POST) state as the newly formed A-site-bound peptidyl-tRNA and P-site-bound deacylated tRNA move to the P and E sites, respectively. Catalyzes the coordinated movement of the two tRNA molecules, the mRNA and conformational changes in the ribosome. This Oleidesulfovibrio alaskensis (strain ATCC BAA-1058 / DSM 17464 / G20) (Desulfovibrio alaskensis) protein is Elongation factor G.